A 377-amino-acid chain; its full sequence is UDP-N-acetylglucosamine 2-epimerase (377 aa).

His-212 is an active-site residue.

It belongs to the UDP-N-acetylglucosamine 2-epimerase family. Homodimer.

The catalysed reaction is UDP-N-acetyl-alpha-D-glucosamine + H2O = aldehydo-N-acetyl-D-mannosamine + UDP + H(+). Catalyzes the conversion of UDP-N-acetylglucosamine (UDP-GlcNAc) to UDP and N-acetyl-D-mannosamine (ManNAc). The sequence is that of UDP-N-acetylglucosamine 2-epimerase (siaA) from Neisseria meningitidis serogroup B (strain ATCC BAA-335 / MC58).